The chain runs to 204 residues: uncharacterized protein (204 aa).

Transmembrane regions (helical) follow at residues 21-50, 92-114, 150-172, and 176-198; these read AWIVFFTIPLVITPLPYVGFLAFFFILLFF, FFTALLYYLFTKFYAVLFFWWWF, LGLRWSFIGLVLLTIAVLLVLSI, and LLASFVVLLLSVVLAHFTAETIL.

The protein resides in the cell membrane. This is an uncharacterized protein from Aquifex aeolicus (strain VF5).